The chain runs to 545 residues: Tripartite motif-containing protein 55 (545 aa).

The segment at 26–82 adopts an RING-type zinc-finger fold; it reads CPICLEMFTKPVVILPCQHNLCRKCASDIFQASNPYLPTRGGTTVASGGRFRCPSCR. The B box-type zinc-finger motif lies at 119 to 161; sequence LDQPMCEEHEEERINIYCLNCEVPTCSLCKVFGAHKDCQVAPL. Positions 124, 127, 147, and 153 each coordinate Zn(2+). Residues 219–258 adopt a coiled-coil conformation; it reads YSILEERKTEMTQAITRTQEEKLEHVRTLIRKYSDHLENV. A COS domain is found at 269-327; sequence MDEPEMAVFLQNAKTLLQKITEASKAFQMEKIEQGYEIMNNFTVNLNREEKIIREIDFS. Disordered regions lie at residues 324–378 and 406–528; these read IDFS…SELA and LVTQ…GADS. Positions 328–355 are enriched in acidic residues; the sequence is REEEDEDDEGEVDEEGEGEDAVEVEEAE. Low complexity-rich tracts occupy residues 417 to 426 and 469 to 493; these read SQQTTQSETS and SAAE…AAVS. Positions 495–506 are enriched in polar residues; sequence KESSSTAATSQI. Low complexity predominate over residues 510–520; the sequence is ASSPQGQAAAL.

Homooligomer and heterooligomer. Interacts with titin/TTN. Interacts with myosins. Interacts with SQSTM1 and NBR1. Probably interacts with TRIM63 and TRIM54. In terms of processing, targeted for degradation through the proteasomal and lysosomal pathways in the presence of SUMO3.

It is found in the nucleus. The protein localises to the cytoplasm. The catalysed reaction is S-ubiquitinyl-[E2 ubiquitin-conjugating enzyme]-L-cysteine + [acceptor protein]-L-lysine = [E2 ubiquitin-conjugating enzyme]-L-cysteine + N(6)-ubiquitinyl-[acceptor protein]-L-lysine.. In terms of biological role, E3 ubiquitin ligase that plays an important role in regulating cardiac development and contractility, muscle growth, metabolism, and fiber-type differentiation. Acts as a critical factor that regulates cardiomyocyte size during development in concert with TRIM63 by regulating E2F1-mediated gene expression. Plays a role in apoptosis induction in cardiomyocytes by promoting ubiquitination of the DUSP1 phosphatase. Promotes non-canonical NF-kappa-B signaling and B-cell-mediated immune responses by mediating NFKB2 'Lys-48'-linked ubiquitination and processing. In turn, NFKB2 is further processed by valosin-containing protein/VCP, an ATPase that mediates ubiquitin-dependent protein degradation by the proteasome. May play a role in preventing macrophages from producing inflammatory factors and migrating by downregulating the level of nuclear NF-kappa-B subunit RELA. Also modifies PPARG via polyubiquitination and accelerates PPARG proteasomal degradation to inhibit its activity. The chain is Tripartite motif-containing protein 55 (Trim55) from Rattus norvegicus (Rat).